The chain runs to 276 residues: UPF0328 protein ECU01_0090/ECU01_1520/ECU02_1550/ECU08_0020 (276 aa).

The interval 1–24 (MGIIDVQRSHLTATPSKERDAPAH) is disordered.

This sequence belongs to the UPF0328 family.

The protein is UPF0328 protein ECU01_0090/ECU01_1520/ECU02_1550/ECU08_0020 of Encephalitozoon cuniculi (strain GB-M1) (Microsporidian parasite).